The primary structure comprises 267 residues: Phosphate import ATP-binding protein PstB (267 aa).

One can recognise an ABC transporter domain in the interval 21-262 (IAIRNLEFYY…PSKQQTEDYI (242 aa)). 53-60 (GPSGCGKS) contributes to the ATP binding site.

It belongs to the ABC transporter superfamily. Phosphate importer (TC 3.A.1.7) family. The complex is composed of two ATP-binding proteins (PstB), two transmembrane proteins (PstC and PstA) and a solute-binding protein (PstS).

It localises to the cell inner membrane. It carries out the reaction phosphate(out) + ATP + H2O = ADP + 2 phosphate(in) + H(+). Part of the ABC transporter complex PstSACB involved in phosphate import. Responsible for energy coupling to the transport system. This is Phosphate import ATP-binding protein PstB from Xylella fastidiosa (strain 9a5c).